The sequence spans 597 residues: Elongation factor 4 (597 aa).

A tr-type G domain is found at 2–184 (KNIRNFSIIA…TIVAKVPAPE (183 aa)). GTP contacts are provided by residues 14-19 (DHGKST) and 131-134 (NKID).

The protein belongs to the TRAFAC class translation factor GTPase superfamily. Classic translation factor GTPase family. LepA subfamily.

The protein localises to the cell inner membrane. It carries out the reaction GTP + H2O = GDP + phosphate + H(+). In terms of biological role, required for accurate and efficient protein synthesis under certain stress conditions. May act as a fidelity factor of the translation reaction, by catalyzing a one-codon backward translocation of tRNAs on improperly translocated ribosomes. Back-translocation proceeds from a post-translocation (POST) complex to a pre-translocation (PRE) complex, thus giving elongation factor G a second chance to translocate the tRNAs correctly. Binds to ribosomes in a GTP-dependent manner. This chain is Elongation factor 4, found in Francisella tularensis subsp. mediasiatica (strain FSC147).